Consider the following 588-residue polypeptide: Sulfite reductase [NADPH] hemoprotein beta-component (588 aa).

The [4Fe-4S] cluster site is built by Cys442, Cys448, Cys487, and Cys491. A siroheme-binding site is contributed by Cys491.

It belongs to the nitrite and sulfite reductase 4Fe-4S domain family. Alpha(8)-beta(8). The alpha component is a flavoprotein, the beta component is a hemoprotein. It depends on siroheme as a cofactor. [4Fe-4S] cluster serves as cofactor.

It carries out the reaction hydrogen sulfide + 3 NADP(+) + 3 H2O = sulfite + 3 NADPH + 4 H(+). It participates in sulfur metabolism; hydrogen sulfide biosynthesis; hydrogen sulfide from sulfite (NADPH route): step 1/1. Component of the sulfite reductase complex that catalyzes the 6-electron reduction of sulfite to sulfide. This is one of several activities required for the biosynthesis of L-cysteine from sulfate. This chain is Sulfite reductase [NADPH] hemoprotein beta-component, found in Actinobacillus pleuropneumoniae serotype 5b (strain L20).